A 517-amino-acid chain; its full sequence is Amidophosphoribosyltransferase (517 aa).

Residue Met1 is modified to N-acetylmethionine. A propeptide spanning residues 1–11 (MELEELGIREE) is cleaved from the precursor. Cys12 (nucleophile) is an active-site residue. A Glutamine amidotransferase type-2 domain is found at 12-261 (CGVFGCIASG…PGEIVEISRH (250 aa)). Residue Cys280 participates in [4Fe-4S] cluster binding. Residues Ser327, Asp389, and Asp390 each coordinate Mg(2+). Positions 426, 503, and 506 each coordinate [4Fe-4S] cluster.

It in the C-terminal section; belongs to the purine/pyrimidine phosphoribosyltransferase family. As to quaternary structure, homotetramer. Requires Mg(2+) as cofactor. It depends on [4Fe-4S] cluster as a cofactor. In terms of tissue distribution, ubiquitously expressed.

It carries out the reaction 5-phospho-beta-D-ribosylamine + L-glutamate + diphosphate = 5-phospho-alpha-D-ribose 1-diphosphate + L-glutamine + H2O. Its pathway is purine metabolism; IMP biosynthesis via de novo pathway; N(1)-(5-phospho-D-ribosyl)glycinamide from 5-phospho-alpha-D-ribose 1-diphosphate: step 1/2. Functionally, catalyzes the formation of phosphoribosylamine from phosphoribosylpyrophosphate (PRPP) and glutamine. In Homo sapiens (Human), this protein is Amidophosphoribosyltransferase (PPAT).